The chain runs to 296 residues: UPF0761 membrane protein YE0031 (296 aa).

7 helical membrane passes run 44-64, 67-87, 108-128, 136-156, 185-205, 212-232, and 246-266; these read LLSL…FPMF, ISIK…GDII, GLIV…NIIW, LVFS…LVGA, LFPL…VPTV, ALIG…GFTM, and VLAV…IVLL.

Belongs to the UPF0761 family.

The protein resides in the cell inner membrane. This chain is UPF0761 membrane protein YE0031, found in Yersinia enterocolitica serotype O:8 / biotype 1B (strain NCTC 13174 / 8081).